The sequence spans 329 residues: Protein PRY2 (329 aa).

An N-terminal signal peptide occupies residues 1–18 (MKFSKVSLLAASASVALS). A compositionally biased stretch (polar residues) spans 122–131 (TSASATQDDV). A disordered region spans residues 122-197 (TSASATQDDV…SSSDFSTSMV (76 aa)). The segment covering 132–190 (TTTLTSSTQPTSTTTPTTTTTSPTTTTSPTTTASPTTTASPTTATTTQSTASSTQSSSS) has biased composition (low complexity). One can recognise an SCP domain in the interval 197 to 311 (VNEHNTKRAL…EWGDYIICSY (115 aa)).

The protein belongs to the CRISP family. Post-translationally, O-glycosylated.

The protein resides in the secreted. Its function is as follows. Secreted protein required for efficient export of lipids such as acetylated sterols. Acts in detoxification of hydrophobic compounds. This chain is Protein PRY2 (PRY2), found in Saccharomyces cerevisiae (strain ATCC 204508 / S288c) (Baker's yeast).